Consider the following 513-residue polypeptide: ATP synthase subunit alpha (513 aa).

169–176 contributes to the ATP binding site; sequence GDRQTGKT.

Belongs to the ATPase alpha/beta chains family. As to quaternary structure, F-type ATPases have 2 components, CF(1) - the catalytic core - and CF(0) - the membrane proton channel. CF(1) has five subunits: alpha(3), beta(3), gamma(1), delta(1), epsilon(1). CF(0) has three main subunits: a(1), b(2) and c(9-12). The alpha and beta chains form an alternating ring which encloses part of the gamma chain. CF(1) is attached to CF(0) by a central stalk formed by the gamma and epsilon chains, while a peripheral stalk is formed by the delta and b chains.

It localises to the cell inner membrane. It carries out the reaction ATP + H2O + 4 H(+)(in) = ADP + phosphate + 5 H(+)(out). Its function is as follows. Produces ATP from ADP in the presence of a proton gradient across the membrane. The alpha chain is a regulatory subunit. This Cupriavidus pinatubonensis (strain JMP 134 / LMG 1197) (Cupriavidus necator (strain JMP 134)) protein is ATP synthase subunit alpha.